Here is a 238-residue protein sequence, read N- to C-terminus: CD63 antigen (238 aa).

Residues 1–11 (MAVEGGMKCVK) are Cytoplasmic-facing. The chain crosses the membrane as a helical span at residues 12–32 (FLLYVLLLAFCACAVGLIAVG). Residues 33 to 51 (VGAQLVLRQTIVQGATPGS) lie on the Extracellular side of the membrane. Residues 52-72 (LLPVVIIAVGAFLFLVAFVGC) form a helical membrane-spanning segment. At 73–81 (CGACKENYC) the chain is on the cytoplasmic side. The chain crosses the membrane as a helical span at residues 82-102 (LMVTFAIFLSLIMLVEVAVAI). Over 103–202 (AGYVFRDKVM…EKIGGWLRSN (100 aa)) the chain is Extracellular. N-linked (GlcNAc...) asparagine glycosylation is found at Asn-130, Asn-150, and Asn-172. A helical membrane pass occupies residues 203–223 (VLVVAAAALGIAFVEVLGIIF). At 224 to 238 (ACCLVKSIRSGYEVM) the chain is on the cytoplasmic side. The short motif at 234-238 (GYEVM) is the Lysosomal targeting motif element.

The protein belongs to the tetraspanin (TM4SF) family. In terms of assembly, interacts with TIMP1 and ITGB1 and recruits TIMP1 to ITGB1. Interacts with CD9. Identified in a complex with CD9 and ITGB3. Interacts with PMEL. Interacts with KDR/VEGFR2; identified in a complex with ITGB1 and KDR/VEGFR2 and is required to recruit KDR to ITGB1 complexes. Interacts with SYT7. Post-translationally, palmitoylated at a low, basal level in unstimulated platelets. The level of palmitoylation increases when platelets are activated by thrombin (in vitro).

The protein resides in the cell membrane. The protein localises to the lysosome membrane. It is found in the late endosome membrane. Its subcellular location is the endosome. It localises to the multivesicular body. The protein resides in the melanosome. The protein localises to the secreted. It is found in the extracellular exosome. Its subcellular location is the cell surface. Functions as a cell surface receptor for TIMP1 and plays a role in the activation of cellular signaling cascades. Plays a role in the activation of ITGB1 and integrin signaling, leading to the activation of AKT, FAK/PTK2 and MAP kinases. Promotes cell survival, reorganization of the actin cytoskeleton, cell adhesion, spreading and migration, via its role in the activation of AKT and FAK/PTK2. Plays a role in VEGFA signaling via its role in regulating the internalization of KDR/VEGFR2. Plays a role in intracellular vesicular transport processes, and is required for normal trafficking of the PMEL luminal domain that is essential for the development and maturation of melanocytes. Plays a role in the adhesion of leukocytes onto endothelial cells via its role in the regulation of SELP trafficking. May play a role in mast cell degranulation in response to Ms4a2/FceRI stimulation, but not in mast cell degranulation in response to other stimuli. This is CD63 antigen (CD63) from Felis catus (Cat).